Consider the following 367-residue polypeptide: MSDNSQKKVIVGMSGGVDSSVSAYLLKEQGYQVVGLFMKNWEEDDDTEYCSASADLADAQAVCDKLGIELHTINFAAEYWDNVFEHFLSEYKAGRTPNPDILCNKEIKFKAFLEYAAEDLGADYIATGHYVRRRDIDGKSQLLRGVDNNKDQSYFLYTLSHQQIAQSLFPVGEMEKPEVRKIAEKLDLATAKKKDSTGICFIGERKFTDFLSRYLPAKPGPIVTVDGETIGEHQGLMYHTLGQRKGLGIGGTKEGSEDPWYVVDKDVANNILIVAQGHEHPRLMSVGLIAQQLHWVAREPITEAFRCTVKTRYRQADIPCTVTPLDEDKIEVRFDYPVAAVTPGQSAVFYQDEVCLGGGIIETRIQE.

Residues 12 to 19 and methionine 38 contribute to the ATP site; that span reads GMSGGVDS. Residues 98-100 are interaction with target base in tRNA; that stretch reads NPD. Cysteine 103 functions as the Nucleophile in the catalytic mechanism. Cysteine 103 and cysteine 200 are oxidised to a cystine. Residue glycine 128 participates in ATP binding. The segment at 150–152 is interaction with tRNA; that stretch reads KDQ. Cysteine 200 serves as the catalytic Cysteine persulfide intermediate. The segment at 312–313 is interaction with tRNA; it reads RY.

This sequence belongs to the MnmA/TRMU family. Interacts with TusE.

The protein localises to the cytoplasm. It catalyses the reaction S-sulfanyl-L-cysteinyl-[protein] + uridine(34) in tRNA + AH2 + ATP = 2-thiouridine(34) in tRNA + L-cysteinyl-[protein] + A + AMP + diphosphate + H(+). Catalyzes the 2-thiolation of uridine at the wobble position (U34) of tRNA(Lys), tRNA(Glu) and tRNA(Gln), leading to the formation of s(2)U34, the first step of tRNA-mnm(5)s(2)U34 synthesis. Sulfur is provided by IscS, via a sulfur-relay system. Binds ATP and its substrate tRNAs. The sequence is that of tRNA-specific 2-thiouridylase MnmA from Proteus mirabilis (strain HI4320).